A 607-amino-acid polypeptide reads, in one-letter code: WD repeat-containing protein 1-B (607 aa).

13 WD repeats span residues 4–45 (EIKK…IRNI), 48–87 (PAIADIYTEHAHQVVVARYAPSGFYIASGDTSGKLRIWDT), 93–135 (LLKY…LWDT), 138–176 (SVGEIIGNIKVINSVDIKQTRPYRLVTGSDDNCCAFFEG), 180–218 (KFKFTMSDHSRFVNCVRFSPDGSRLASAGADGQIFLYDG), 224–263 (VCSLGGSKAHDGGIYAVSWSPDGTQLLSASGDKTAKIWDV), 270–306 (TTFNLGSDVLDQQLGCLWQKDYLLSVSLSGYINYLDK), 311–351 (KPFR…YWDA), 358–408 (TFTG…KMDV), 432–474 (LKDK…LYSI), 480–518 (KDEGKTLPAKGAVTDLAYSPDGAFLAVTDANKVVTVFSV), 523–561 (SEHNSYYGHHAKALSVAWSPDNEHFASSGMDMMVYVWTL), and 566–604 (TRIKMPDAHRLHHVSSLAWLDENTLATVSHDACVKQWTV).

Belongs to the WD repeat AIP1 family.

It is found in the cell membrane. It localises to the cytoplasm. The protein resides in the cytoskeleton. Its subcellular location is the nucleus. In terms of biological role, induces disassembly of actin filaments in conjunction with ADF/cofilin family proteins. Doesn't sever actin filaments alone, but caps the barbed ends of filaments severed by cofilin, which blocks annealing and depolymerization and allows more extensive severing by cofilin. This is WD repeat-containing protein 1-B (wdr1-b) from Xenopus laevis (African clawed frog).